The primary structure comprises 118 residues: Large ribosomal subunit protein bL20 (118 aa).

The protein belongs to the bacterial ribosomal protein bL20 family.

In terms of biological role, binds directly to 23S ribosomal RNA and is necessary for the in vitro assembly process of the 50S ribosomal subunit. It is not involved in the protein synthesizing functions of that subunit. The polypeptide is Large ribosomal subunit protein bL20 (Staphylococcus aureus (strain Mu3 / ATCC 700698)).